The sequence spans 576 residues: Eukaryotic translation initiation factor 3 subunit D (576 aa).

Positions Asp-103–Arg-176 are disordered. Residues Gly-110–Gly-122 are compositionally biased toward gly residues. Residues Gly-165–Arg-176 are compositionally biased toward basic and acidic residues. The interval Thr-304–Pro-318 is RNA gate.

This sequence belongs to the eIF-3 subunit D family. Component of the eukaryotic translation initiation factor 3 (eIF-3) complex.

Its subcellular location is the cytoplasm. Functionally, mRNA cap-binding component of the eukaryotic translation initiation factor 3 (eIF-3) complex, which is involved in protein synthesis of a specialized repertoire of mRNAs and, together with other initiation factors, stimulates binding of mRNA and methionyl-tRNAi to the 40S ribosome. The eIF-3 complex specifically targets and initiates translation of a subset of mRNAs involved in cell proliferation. In the eIF-3 complex, eif3d specifically recognizes and binds the 7-methylguanosine cap of a subset of mRNAs. This is Eukaryotic translation initiation factor 3 subunit D from Botryotinia fuckeliana (strain B05.10) (Noble rot fungus).